A 393-amino-acid polypeptide reads, in one-letter code: Arginine biosynthesis bifunctional protein ArgJ (393 aa).

Residues Thr-142, Lys-168, Thr-179, Glu-265, Asn-388, and Ser-393 each coordinate substrate. The active-site Nucleophile is Thr-179.

The protein belongs to the ArgJ family. As to quaternary structure, heterotetramer of two alpha and two beta chains.

It localises to the cytoplasm. It carries out the reaction N(2)-acetyl-L-ornithine + L-glutamate = N-acetyl-L-glutamate + L-ornithine. The catalysed reaction is L-glutamate + acetyl-CoA = N-acetyl-L-glutamate + CoA + H(+). It functions in the pathway amino-acid biosynthesis; L-arginine biosynthesis; L-ornithine and N-acetyl-L-glutamate from L-glutamate and N(2)-acetyl-L-ornithine (cyclic): step 1/1. The protein operates within amino-acid biosynthesis; L-arginine biosynthesis; N(2)-acetyl-L-ornithine from L-glutamate: step 1/4. Its function is as follows. Catalyzes two activities which are involved in the cyclic version of arginine biosynthesis: the synthesis of N-acetylglutamate from glutamate and acetyl-CoA as the acetyl donor, and of ornithine by transacetylation between N(2)-acetylornithine and glutamate. This Desulfotalea psychrophila (strain LSv54 / DSM 12343) protein is Arginine biosynthesis bifunctional protein ArgJ.